Reading from the N-terminus, the 251-residue chain is Ribosome maturation factor RimP (251 aa).

The disordered stretch occupies residues 198-251 (NLGLEPPAAPHAKISEKTTKNTKPKKKPAPTNTKKHRLAAERARRGEIEPDEGD). Basic residues predominate over residues 217–234 (KNTKPKKKPAPTNTKKHR). The span at 235-245 (LAAERARRGEI) shows a compositional bias: basic and acidic residues.

This sequence belongs to the RimP family.

The protein localises to the cytoplasm. In terms of biological role, required for maturation of 30S ribosomal subunits. The polypeptide is Ribosome maturation factor RimP (Bradyrhizobium diazoefficiens (strain JCM 10833 / BCRC 13528 / IAM 13628 / NBRC 14792 / USDA 110)).